The primary structure comprises 238 residues: Cysteine-rich venom protein 2 (238 aa).

The N-terminal stretch at 1 to 19 is a signal peptide; sequence MIAFIVLLSLAAVLQQSSG. Positions 38–164 constitute an SCP domain; the sequence is VDKHNALRRS…STKYLYVCQY (127 aa). Cystine bridges form between C75–C153, C92–C165, C148–C162, C184–C191, C187–C196, C200–C233, C209–C227, and C218–C231. Residues 200–233 enclose the ShKT domain; the sequence is CEYEDAYTNCNDLVKERKCQTEWIKSQCPATCFC.

The protein belongs to the CRISP family. Expressed by the venom gland.

It is found in the secreted. Blocks contraction of smooth muscle elicited by high potassium-induced depolarization, but does not block caffeine-stimulated contraction. May target voltage-gated calcium channels (Cav) on smooth muscle. In Hydrophis hardwickii (Hardwick's spine-bellied seasnake), this protein is Cysteine-rich venom protein 2.